The primary structure comprises 93 residues: Small ribosomal subunit protein uS17 (93 aa).

It belongs to the universal ribosomal protein uS17 family. In terms of assembly, part of the 30S ribosomal subunit.

Functionally, one of the primary rRNA binding proteins, it binds specifically to the 5'-end of 16S ribosomal RNA. This is Small ribosomal subunit protein uS17 from Rhodococcus jostii (strain RHA1).